Here is a 151-residue protein sequence, read N- to C-terminus: Glycine and methionine-rich protein (151 aa).

The first 19 residues, 1–19 (MKTAVVLAAFSALMALARA), serve as a signal peptide directing secretion.

Component of the acid-insoluble and acid-soluble organic matrix of calcified layers of the shell (at protein level).

The protein resides in the secreted. The polypeptide is Glycine and methionine-rich protein (Lottia gigantea (Giant owl limpet)).